Consider the following 229-residue polypeptide: Lipoprotein-releasing system ATP-binding protein LolD 1 (229 aa).

One can recognise an ABC transporter domain in the interval 2–229 (LVVSELSKSY…VRRGRFGITA (228 aa)). 38 to 45 (GPSGSGKT) provides a ligand contact to ATP.

Belongs to the ABC transporter superfamily. Lipoprotein translocase (TC 3.A.1.125) family. In terms of assembly, the complex is composed of two ATP-binding proteins (LolD) and two transmembrane proteins (LolC and LolE).

Its subcellular location is the cell inner membrane. In terms of biological role, part of the ABC transporter complex LolCDE involved in the translocation of mature outer membrane-directed lipoproteins, from the inner membrane to the periplasmic chaperone, LolA. Responsible for the formation of the LolA-lipoprotein complex in an ATP-dependent manner. The polypeptide is Lipoprotein-releasing system ATP-binding protein LolD 1 (Rhodopirellula baltica (strain DSM 10527 / NCIMB 13988 / SH1)).